A 164-amino-acid chain; its full sequence is MERSASVGVNDGRFGGNQFYSPSFSSSSSSSSMRHVNYSCGSCGYELNLSSTNRITSTIGSKYGKSMKSGIISFFNIDEGRFSQVDEFQCMPHFSRYSWGLFRHRTKLLCRKCNNYIGNASQEKAPEYALVTQNSDPTSPRIGSVTKYDIRIRSLQPSSAVALL.

The transit peptide at Met-1 to Gly-60 directs the protein to the chloroplast.

It localises to the plastid. Its subcellular location is the chloroplast. This is an uncharacterized protein from Arabidopsis thaliana (Mouse-ear cress).